We begin with the raw amino-acid sequence, 301 residues long: 4-diphosphocytidyl-2-C-methyl-D-erythritol kinase (301 aa).

Lys18 is an active-site residue. Residue 103-113 participates in ATP binding; that stretch reads PVAAGIGGGSA. Asp145 is a catalytic residue.

This sequence belongs to the GHMP kinase family. IspE subfamily.

The enzyme catalyses 4-CDP-2-C-methyl-D-erythritol + ATP = 4-CDP-2-C-methyl-D-erythritol 2-phosphate + ADP + H(+). The protein operates within isoprenoid biosynthesis; isopentenyl diphosphate biosynthesis via DXP pathway; isopentenyl diphosphate from 1-deoxy-D-xylulose 5-phosphate: step 3/6. Catalyzes the phosphorylation of the position 2 hydroxy group of 4-diphosphocytidyl-2C-methyl-D-erythritol. The chain is 4-diphosphocytidyl-2-C-methyl-D-erythritol kinase from Bradyrhizobium sp. (strain BTAi1 / ATCC BAA-1182).